Consider the following 246-residue polypeptide: uncharacterized protein (246 aa).

4 consecutive transmembrane segments (helical) span residues 32 to 52, 69 to 89, 121 to 141, and 146 to 166; these read TLFF…VGFI, IIAI…MCPF, IYFK…GVKI, and LAYL…MFFC. 2 4Fe-4S ferredoxin-type domains span residues 185-213 and 210-239; these read FKLK…ITEK and ITEK…FSAF. [4Fe-4S] cluster-binding residues include C194, C197, C200, C204, C219, C222, C225, and C229.

The protein localises to the cell membrane. This is an uncharacterized protein from Methanocaldococcus jannaschii (strain ATCC 43067 / DSM 2661 / JAL-1 / JCM 10045 / NBRC 100440) (Methanococcus jannaschii).